The sequence spans 127 residues: Aspartate 1-decarboxylase (127 aa).

The active-site Schiff-base intermediate with substrate; via pyruvic acid is the Ser25. Ser25 is modified (pyruvic acid (Ser)). Thr57 serves as a coordination point for substrate. Tyr58 functions as the Proton donor in the catalytic mechanism. Residue 73-75 participates in substrate binding; that stretch reads GAA.

It belongs to the PanD family. Heterooctamer of four alpha and four beta subunits. It depends on pyruvate as a cofactor. In terms of processing, is synthesized initially as an inactive proenzyme, which is activated by self-cleavage at a specific serine bond to produce a beta-subunit with a hydroxyl group at its C-terminus and an alpha-subunit with a pyruvoyl group at its N-terminus.

It localises to the cytoplasm. The enzyme catalyses L-aspartate + H(+) = beta-alanine + CO2. Its pathway is cofactor biosynthesis; (R)-pantothenate biosynthesis; beta-alanine from L-aspartate: step 1/1. Functionally, catalyzes the pyruvoyl-dependent decarboxylation of aspartate to produce beta-alanine. The sequence is that of Aspartate 1-decarboxylase from Bacillus subtilis (strain 168).